The following is a 338-amino-acid chain: MISTMIPSRGLIEEAFPGFAVSALVAATAQFLSDHYGAPAMLLALLLGLALNFLAEDGTRTAPGIAFTARTVLRLGVALLGARISAGMLAALGPGAIALVVAGVVLTILFALAASRLVGRGWRFALLTGGSVAICGASAAMAIAAVLPRYEKSERDLVFTVLSVTVLSTVAMVLYPMLAGLFGFTARDSGVFLGGTIHDVAQVVGAGFSIGPETGETATLVKLIRVSMLAPVVLCFSLAIRARGLADADGGKAPPLLPGFVIGFLALAGLNSLGLIPQGVSDFAGQVSRWALLIAIAAVGIKTSLGKMLEVGTGAIALILAETVFLAVFVTAGLHLLG.

A run of 9 helical transmembrane segments spans residues Tyr36–Ala55, Leu75–Leu92, Ala96–Val118, Ala125–Leu147, Leu162–Phe184, Leu223–Leu245, Pro255–Pro277, Trp290–Leu309, and Gly314–Leu336.

It belongs to the UPF0324 family.

The protein resides in the cell membrane. The polypeptide is UPF0324 membrane protein TauZ (tauZ) (Paracoccus pantotrophus (Thiosphaera pantotropha)).